The chain runs to 296 residues: NAD kinase (296 aa).

D73 serves as the catalytic Proton acceptor. Residues 73-74, K78, 151-152, R178, D180, and 191-196 contribute to the NAD(+) site; these read DG, NE, and TAHAMS.

The protein belongs to the NAD kinase family. A divalent metal cation is required as a cofactor.

The protein resides in the cytoplasm. The catalysed reaction is NAD(+) + ATP = ADP + NADP(+) + H(+). Its function is as follows. Involved in the regulation of the intracellular balance of NAD and NADP, and is a key enzyme in the biosynthesis of NADP. Catalyzes specifically the phosphorylation on 2'-hydroxyl of the adenosine moiety of NAD to yield NADP. In Francisella tularensis subsp. holarctica (strain FTNF002-00 / FTA), this protein is NAD kinase.